The following is a 200-amino-acid chain: Large ribosomal subunit protein uL4 (200 aa).

A disordered region spans residues 45-64 (QKTRAEVSGGGIKPWRQKGT).

It belongs to the universal ribosomal protein uL4 family. In terms of assembly, part of the 50S ribosomal subunit.

Functionally, one of the primary rRNA binding proteins, this protein initially binds near the 5'-end of the 23S rRNA. It is important during the early stages of 50S assembly. It makes multiple contacts with different domains of the 23S rRNA in the assembled 50S subunit and ribosome. In terms of biological role, forms part of the polypeptide exit tunnel. The chain is Large ribosomal subunit protein uL4 from Psychrobacter cryohalolentis (strain ATCC BAA-1226 / DSM 17306 / VKM B-2378 / K5).